The primary structure comprises 622 residues: E3 ubiquitin-protein ligase hrd-1 (622 aa).

Positions 1-23 (MRVSAGLMIGGSCVATAATVLNA) are cleaved as a signal peptide. The Lumenal segment spans residues 24–41 (FVINKQFYPSIVYLSKSN). A helical transmembrane segment spans residues 42-62 (ASMAVLYFQGIVLVYLMFQLL). The Cytoplasmic portion of the chain corresponds to 63 to 99 (KSILFGDLRAAEAEHLSERTWHAVLETCLAFTVFRDD). The helical transmembrane segment at 100–120 (FSAMFVMQFIGLLFIKCFHWL) threads the bilayer. Residues 121–141 (ADDRVDMMERSPVITLRFHLR) are Lumenal-facing. Residues 142–162 (MMTVLAALGFADSYFVSSAYF) form a helical membrane-spanning segment. Residues 163–170 (STITKGAS) are Cytoplasmic-facing. The chain crosses the membrane as a helical span at residues 171-191 (SQIVFGFEYAILLALVLHVTI). The Lumenal segment spans residues 192 to 215 (KYLLHMHDLRNPQSWDNKAVYLLY). The chain crosses the membrane as a helical span at residues 216 to 236 (AELLINLIRCVLYGFFAVIML). Over 237 to 622 (RVHTFPLFSV…RFPPPNPEHE (386 aa)) the chain is Cytoplasmic. The RING-type; atypical zinc finger occupies 292-333 (CIICREEMTVESSPKRLPCSHVFHAHCLRSWFQRQQTCPTCR). Pro residues predominate over residues 436-445 (MPPPPIPQPN). Disordered stretches follow at residues 436–463 (MPPP…PNFD) and 514–622 (PVPT…PEHE). A compositionally biased stretch (low complexity) spans 526–538 (ATASSVPTSVPSE). Over residues 562–577 (FNDTQSTSTPSTSAGP) the composition is skewed to polar residues. The span at 579–596 (PSLTPSTSSVPSTSSVRT) shows a compositional bias: low complexity.

It belongs to the HRD1 family. As to quaternary structure, homodimer.

It is found in the endoplasmic reticulum membrane. The catalysed reaction is S-ubiquitinyl-[E2 ubiquitin-conjugating enzyme]-L-cysteine + [acceptor protein]-L-lysine = [E2 ubiquitin-conjugating enzyme]-L-cysteine + N(6)-ubiquitinyl-[acceptor protein]-L-lysine.. It functions in the pathway protein modification; protein ubiquitination. Functionally, acts as an E3 ubiquitin-protein ligase which accepts ubiquitin specifically from endoplasmic reticulum-associated ubc-7 E2 ligase and transfers it to substrates, promoting their degradation. Component of the endoplasmic reticulum quality control (ERQC) system, which is also called the ER-associated degradation (ERAD) system, involved in ubiquitin-dependent degradation of misfolded endoplasmic reticulum proteins. Also promotes the degradation of normal but naturally short-lived proteins. Protects cells from ER stress-induced apoptosis. Thought to play a role together with hsp-3 in developmental growth and function of intestinal cells and to play a role together with hsp-4 in gonad formation. The protein is E3 ubiquitin-protein ligase hrd-1 of Caenorhabditis briggsae.